We begin with the raw amino-acid sequence, 458 residues long: UDP-N-acetylmuramate--L-alanine ligase (458 aa).

Position 118-124 (118-124 (GTHGKTT)) interacts with ATP.

Belongs to the MurCDEF family.

It is found in the cytoplasm. It catalyses the reaction UDP-N-acetyl-alpha-D-muramate + L-alanine + ATP = UDP-N-acetyl-alpha-D-muramoyl-L-alanine + ADP + phosphate + H(+). It functions in the pathway cell wall biogenesis; peptidoglycan biosynthesis. Functionally, cell wall formation. In Clostridium botulinum (strain Langeland / NCTC 10281 / Type F), this protein is UDP-N-acetylmuramate--L-alanine ligase.